Here is a 985-residue protein sequence, read N- to C-terminus: Alanine--tRNA ligase, mitochondrial (985 aa).

Residues 1–23 (MAASVAAAARRLRRAIRRSPAWR) constitute a mitochondrion transit peptide. ATP-binding positions include Arg110, His128, Trp210, and 240-242 (LWN). Asn242 and Asp265 together coordinate L-alanine. Gly269 contacts ATP. Zn(2+) contacts are provided by His632, His636, Cys749, and His753.

This sequence belongs to the class-II aminoacyl-tRNA synthetase family. In terms of assembly, monomer. Requires Zn(2+) as cofactor.

The protein resides in the mitochondrion. The enzyme catalyses tRNA(Ala) + L-alanine + ATP = L-alanyl-tRNA(Ala) + AMP + diphosphate. It carries out the reaction (S)-lactate + ATP + H(+) = (S)-lactoyl-AMP + diphosphate. It catalyses the reaction (S)-lactoyl-AMP + L-lysyl-[protein] = N(6)-[(S)-lactoyl]-L-lysyl-[protein] + AMP + 2 H(+). Catalyzes the attachment of alanine to tRNA(Ala) in a two-step reaction: alanine is first activated by ATP to form Ala-AMP and then transferred to the acceptor end of tRNA(Ala). Also edits incorrectly charged tRNA(Ala) via its editing domain. In presence of high levels of lactate, also acts as a protein lactyltransferase that mediates lactylation of lysine residues in target proteins, such as CGAS. Acts as an inhibitor of cGAS/STING signaling by catalyzing lactylation of CGAS, preventing the formation of liquid-like droplets in which CGAS is activated. The sequence is that of Alanine--tRNA ligase, mitochondrial from Homo sapiens (Human).